The sequence spans 314 residues: Lipoyl synthase (314 aa).

C61, C66, C72, C87, C91, C94, and S301 together coordinate [4Fe-4S] cluster. In terms of domain architecture, Radical SAM core spans F73–S290.

The protein belongs to the radical SAM superfamily. Lipoyl synthase family. [4Fe-4S] cluster is required as a cofactor.

The protein resides in the cytoplasm. It carries out the reaction [[Fe-S] cluster scaffold protein carrying a second [4Fe-4S](2+) cluster] + N(6)-octanoyl-L-lysyl-[protein] + 2 oxidized [2Fe-2S]-[ferredoxin] + 2 S-adenosyl-L-methionine + 4 H(+) = [[Fe-S] cluster scaffold protein] + N(6)-[(R)-dihydrolipoyl]-L-lysyl-[protein] + 4 Fe(3+) + 2 hydrogen sulfide + 2 5'-deoxyadenosine + 2 L-methionine + 2 reduced [2Fe-2S]-[ferredoxin]. Its pathway is protein modification; protein lipoylation via endogenous pathway; protein N(6)-(lipoyl)lysine from octanoyl-[acyl-carrier-protein]: step 2/2. Its function is as follows. Catalyzes the radical-mediated insertion of two sulfur atoms into the C-6 and C-8 positions of the octanoyl moiety bound to the lipoyl domains of lipoate-dependent enzymes, thereby converting the octanoylated domains into lipoylated derivatives. This chain is Lipoyl synthase, found in Nitrosomonas eutropha (strain DSM 101675 / C91 / Nm57).